Consider the following 356-residue polypeptide: tRNA (guanine(26)-N(2))-dimethyltransferase (356 aa).

In terms of domain architecture, Trm1 methyltransferase spans 5 to 352 (VLRREGTVEF…VSAGEVERVL (348 aa)). S-adenosyl-L-methionine is bound by residues Arg-40, Arg-67, Asp-85, Asp-111, and Ala-112.

This sequence belongs to the class I-like SAM-binding methyltransferase superfamily. Trm1 family.

The enzyme catalyses guanosine(26) in tRNA + 2 S-adenosyl-L-methionine = N(2)-dimethylguanosine(26) in tRNA + 2 S-adenosyl-L-homocysteine + 2 H(+). Its function is as follows. Dimethylates a single guanine residue at position 26 of a number of tRNAs using S-adenosyl-L-methionine as donor of the methyl groups. The chain is tRNA (guanine(26)-N(2))-dimethyltransferase from Pyrobaculum arsenaticum (strain DSM 13514 / JCM 11321 / PZ6).